A 239-amino-acid chain; its full sequence is Uridylate kinase (239 aa).

Position 12–15 (12–15 (KLSG)) interacts with ATP. Residues 21–26 (GEQGFG) are involved in allosteric activation by GTP. Gly-55 serves as a coordination point for UMP. ATP is bound by residues Gly-56 and Arg-60. UMP contacts are provided by residues Asp-75 and 136–143 (TGNPYFST). ATP is bound by residues Thr-163, Tyr-169, and Asp-172.

Belongs to the UMP kinase family. Homohexamer.

It is found in the cytoplasm. The enzyme catalyses UMP + ATP = UDP + ADP. It functions in the pathway pyrimidine metabolism; CTP biosynthesis via de novo pathway; UDP from UMP (UMPK route): step 1/1. Its activity is regulated as follows. Allosterically activated by GTP. Inhibited by UTP. In terms of biological role, catalyzes the reversible phosphorylation of UMP to UDP. This Koribacter versatilis (strain Ellin345) protein is Uridylate kinase.